The following is a 234-amino-acid chain: Sugar fermentation stimulation protein A (234 aa).

The H-T-H motif DNA-binding region spans 201 to 220; it reads LLSEAQQRGVEILAYKAEIS.

It belongs to the SfsA family.

In terms of biological role, binds to DNA non-specifically. Could be a regulatory factor involved in maltose metabolism. The polypeptide is Sugar fermentation stimulation protein A (Shigella sonnei (strain Ss046)).